The primary structure comprises 342 residues: MATH domain and coiled-coil domain-containing protein At3g44800 (342 aa).

In terms of domain architecture, MATH spans 3 to 129 (YEKFTWVIKN…NNEVKIVAEV (127 aa)). Residues 253–327 (KVDWLERKLE…ALLEKEKGKV (75 aa)) are a coiled coil.

The sequence is that of MATH domain and coiled-coil domain-containing protein At3g44800 from Arabidopsis thaliana (Mouse-ear cress).